We begin with the raw amino-acid sequence, 510 residues long: Hexose carrier protein HEX6 (510 aa).

The Cytoplasmic segment spans residues 1 to 22 (MAAGLAITSEGGQYNGRMTSFV). 12 helical membrane passes run 23–43 (ALSCMMAAMGGVIFGYDIGVS), 83–103 (SFTSSLYVAGLVASFFASSVT), 118–128 (VFLAXAALGGA), 140–160 (VLLGVGVGFANQAVPLYLSEM), 169–189 (INNGFQFSVGIGALSANLINY), 202–222 (ISLAMAAVPAAILTFGALFLP), 284–304 (LVMAVAIPFFQQVTGINVIAF), 325–345 (IVTGLVGSASTFISMLIVDKL), 349–369 (ALFIFGGVQMFVAQIMVGSIM), 382–402 (GYAYIVLILICIYVAGFGWSW), 428–448 (AVSFLFTFVVAQTFLSMLCHF), and 451–471 (GIFFFFGGWVVVMTAFVHFLL). Residues 472–510 (PETKKVPIEKMDIVWRDHWFWKKIIGEEAAEENNKMEAA) are Cytoplasmic-facing.

Belongs to the major facilitator superfamily. Sugar transporter (TC 2.A.1.1) family.

The protein resides in the membrane. Active uptake of hexoses. Probable glucose/hydrogen symport. This Ricinus communis (Castor bean) protein is Hexose carrier protein HEX6 (HEX6).